We begin with the raw amino-acid sequence, 627 residues long: Asparagine synthetase domain-containing protein 1 (627 aa).

Catalysis depends on Cys-2, which acts as the For GATase activity. One can recognise a Glutamine amidotransferase type-2 domain in the interval 2–184 (CGICCSVSFS…ASGIFQIDLN (183 aa)). An Asparagine synthetase domain is found at 308 to 597 (ASKEVLKTCS…GLPASALLPK (290 aa)). Residues 373–404 (QQNHHEIPSEESSQSPAADEGPGEAEVPDRVT) are disordered.

The polypeptide is Asparagine synthetase domain-containing protein 1 (Asnsd1) (Mus musculus (Mouse)).